A 150-amino-acid chain; its full sequence is Arginine repressor (150 aa).

This sequence belongs to the ArgR family.

The protein localises to the cytoplasm. Its pathway is amino-acid biosynthesis; L-arginine biosynthesis [regulation]. Its function is as follows. Regulates arginine biosynthesis genes. This Staphylococcus carnosus (strain TM300) protein is Arginine repressor.